The primary structure comprises 148 residues: Pivalyl-CoA mutase small subunit (148 aa).

The region spanning 8-138 (PLRVLVTKIG…TALGQKSRAE (131 aa)) is the B12-binding domain. Histidine 21 is an adenosylcob(III)alamin binding site.

The protein belongs to the acyl-CoA mutase small subunit family. As to quaternary structure, monomer in the absence of the PCM large subunit. Weakly interacts with the PCM large subunit; an alpha(2)beta(2) stoichiometry seems to represent the active state of the enzyme. Requires adenosylcob(III)alamin as cofactor.

It carries out the reaction 3-methylbutanoyl-CoA = 2,2-dimethylpropanoyl-CoA. Its function is as follows. Together with Xaut_5043, catalyzes the reversible isomerization between pivalyl-CoA and isovaleryl-CoA, using radical chemistry. Does not exhibit isobutyryl-CoA mutase (ICM) activity. The polypeptide is Pivalyl-CoA mutase small subunit (Xanthobacter autotrophicus (strain ATCC BAA-1158 / Py2)).